A 91-amino-acid chain; its full sequence is Large ribosomal subunit protein bL27 (91 aa).

Residues 1 to 22 form a disordered region; the sequence is MAHKKAGGSSRNGRDSDGRRLG.

Belongs to the bacterial ribosomal protein bL27 family.

The sequence is that of Large ribosomal subunit protein bL27 from Beijerinckia indica subsp. indica (strain ATCC 9039 / DSM 1715 / NCIMB 8712).